We begin with the raw amino-acid sequence, 377 residues long: Terpene synthase 1 (377 aa).

The DDxx(x)D/E motif signature appears at 81 to 86 (DDALDA). Residues 221 to 229 (NDLVSYEKE) carry the NDxxSxxxD/E motif motif. Residues 326 to 359 (RKQSSSPNLTNSISIPTNNTNNSNNITSSPNKKQ) are disordered. Residues 335-356 (TNSISIPTNNTNNSNNITSSPN) show a composition bias toward low complexity.

It belongs to the terpene synthase family.

It carries out the reaction (2E,6E)-farnesyl diphosphate = (2S,3R,6S,9S)-(-)-protoillud-7-ene + diphosphate. In terms of biological role, terpene synthase that converts its substrate farnesyl diphosphate (FPP) into the sesquiterpene protoillud-7-ene. The protein is Terpene synthase 1 of Dictyostelium purpureum (Slime mold).